We begin with the raw amino-acid sequence, 218 residues long: Octanoyltransferase (218 aa).

One can recognise a BPL/LPL catalytic domain in the interval 31-206; the sequence is REAGDEVWLV…QLVKHLDYAE (176 aa). Substrate-binding positions include 70–77, 137–139, and 150–152; these read RGGQVTYH, SLG, and GLA. Residue cysteine 168 is the Acyl-thioester intermediate of the active site.

Belongs to the LipB family.

Its subcellular location is the cytoplasm. The enzyme catalyses octanoyl-[ACP] + L-lysyl-[protein] = N(6)-octanoyl-L-lysyl-[protein] + holo-[ACP] + H(+). It participates in protein modification; protein lipoylation via endogenous pathway; protein N(6)-(lipoyl)lysine from octanoyl-[acyl-carrier-protein]: step 1/2. Catalyzes the transfer of endogenously produced octanoic acid from octanoyl-acyl-carrier-protein onto the lipoyl domains of lipoate-dependent enzymes. Lipoyl-ACP can also act as a substrate although octanoyl-ACP is likely to be the physiological substrate. This Pseudomonas syringae pv. tomato (strain ATCC BAA-871 / DC3000) protein is Octanoyltransferase.